The chain runs to 157 residues: Small ribosomal subunit protein uS7 (157 aa).

It belongs to the universal ribosomal protein uS7 family. Part of the 30S ribosomal subunit. Contacts proteins S9 and S11.

Functionally, one of the primary rRNA binding proteins, it binds directly to 16S rRNA where it nucleates assembly of the head domain of the 30S subunit. Is located at the subunit interface close to the decoding center, probably blocks exit of the E-site tRNA. The sequence is that of Small ribosomal subunit protein uS7 from Borreliella afzelii (strain PKo) (Borrelia afzelii).